A 213-amino-acid polypeptide reads, in one-letter code: Peroxynitrite isomerase (213 aa).

A compositionally biased stretch (low complexity) spans 1 to 10 (MGADATGDTA). Residues 1–26 (MGADATGDTAARGDRAAHGDTASGGA) form a disordered region. A GXWXGXG motif is present at residues 51 to 57 (GTWRGEG). Heme b is bound at residue His-203.

Belongs to the nitrobindin family. Homodimer. Heme b is required as a cofactor.

It catalyses the reaction peroxynitrite = nitrate. Its pathway is nitrogen metabolism. In terms of biological role, heme-binding protein able to scavenge peroxynitrite and to protect free L-tyrosine against peroxynitrite-mediated nitration, by acting as a peroxynitrite isomerase that converts peroxynitrite to nitrate. Therefore, this protein likely plays a role in peroxynitrite sensing and in the detoxification of reactive nitrogen and oxygen species (RNS and ROS, respectively). Is able to bind nitric oxide (NO) in vitro, but may act as a sensor of peroxynitrite levels in vivo. The polypeptide is Peroxynitrite isomerase (Parafrankia sp. (strain EAN1pec)).